A 309-amino-acid chain; its full sequence is Acetylglutamate kinase (309 aa).

Residues 82-83 (GG), R104, and N206 contribute to the substrate site.

It belongs to the acetylglutamate kinase family. ArgB subfamily.

It is found in the cytoplasm. The enzyme catalyses N-acetyl-L-glutamate + ATP = N-acetyl-L-glutamyl 5-phosphate + ADP. The protein operates within amino-acid biosynthesis; L-arginine biosynthesis; N(2)-acetyl-L-ornithine from L-glutamate: step 2/4. In terms of biological role, catalyzes the ATP-dependent phosphorylation of N-acetyl-L-glutamate. The chain is Acetylglutamate kinase from Cupriavidus pinatubonensis (strain JMP 134 / LMG 1197) (Cupriavidus necator (strain JMP 134)).